A 172-amino-acid chain; its full sequence is ATP synthase subunit b (172 aa).

Residues 17–37 traverse the membrane as a helical segment; it reads IVFSAIVLAIVLPFFWWFVIP.

The protein belongs to the ATPase B chain family. F-type ATPases have 2 components, F(1) - the catalytic core - and F(0) - the membrane proton channel. F(1) has five subunits: alpha(3), beta(3), gamma(1), delta(1), epsilon(1). F(0) has three main subunits: a(1), b(2) and c(10-14). The alpha and beta chains form an alternating ring which encloses part of the gamma chain. F(1) is attached to F(0) by a central stalk formed by the gamma and epsilon chains, while a peripheral stalk is formed by the delta and b chains.

Its subcellular location is the cell membrane. In terms of biological role, f(1)F(0) ATP synthase produces ATP from ADP in the presence of a proton or sodium gradient. F-type ATPases consist of two structural domains, F(1) containing the extramembraneous catalytic core and F(0) containing the membrane proton channel, linked together by a central stalk and a peripheral stalk. During catalysis, ATP synthesis in the catalytic domain of F(1) is coupled via a rotary mechanism of the central stalk subunits to proton translocation. Functionally, component of the F(0) channel, it forms part of the peripheral stalk, linking F(1) to F(0). This Tropheryma whipplei (strain TW08/27) (Whipple's bacillus) protein is ATP synthase subunit b.